The sequence spans 221 residues: Alpha-ketoglutarate-dependent dioxygenase alkB homolog 7, mitochondrial (221 aa).

The transit peptide at 1–23 (MAGGGQVVLRTLSQQGWVRGSGA) directs the protein to the mitochondrion. Residues H121 and D123 each contribute to the Fe cation site. Y165 contributes to the 2-oxoglutarate binding site. H177 provides a ligand contact to Fe cation. 2-oxoglutarate-binding positions include 197–199 (RIS) and R203.

This sequence belongs to the alkB family. Fe(2+) is required as a cofactor.

It is found in the mitochondrion matrix. In terms of biological role, may function as protein hydroxylase; can catalyze auto-hydroxylation at Leu-110 (in vitro), but this activity may be due to the absence of the true substrate. Required to induce programmed necrosis in response to DNA damage caused by cytotoxic alkylating agents. Acts by triggering the collapse of mitochondrial membrane potential and loss of mitochondrial function that leads to energy depletion and cell death. ALKBH7-mediated necrosis is probably required to prevent the accumulation of cells with DNA damage. Does not display DNA demethylase activity. Involved in fatty acid metabolism. This chain is Alpha-ketoglutarate-dependent dioxygenase alkB homolog 7, mitochondrial (ALKBH7), found in Bos taurus (Bovine).